Here is a 345-residue protein sequence, read N- to C-terminus: MHKKDFHYELPDALIAQAPLPERSAARMLIVDGHQGTWEDAWVRDLPGVLRPGDLLVLNDTRVLPARLQARKTTGGAVELLLDRLLDARDGWFLAKSSKALRPGMSIHLPGGAVATVEEKDGMDVRLSLPADVAWLPILEAGGSMPLPPYIRRAAEASDRERYQTVYAARPGAVAAPTAGLHFDTELLDALAARGVERTFVTLHVGAGTFLPVRSEDITEHPMHAETMEVSATTVAAVAAARARGGRVIAVGTTACRALETAAQGGTLRPFTGETRLFLYPGKTFQVTDGLLTNFHLPESTLLMLVCAFAGMECMLAAYRHAVAEGYRFFSYGDAMLISPQAGRR.

This sequence belongs to the QueA family. As to quaternary structure, monomer.

The protein localises to the cytoplasm. The enzyme catalyses 7-aminomethyl-7-carbaguanosine(34) in tRNA + S-adenosyl-L-methionine = epoxyqueuosine(34) in tRNA + adenine + L-methionine + 2 H(+). The protein operates within tRNA modification; tRNA-queuosine biosynthesis. Functionally, transfers and isomerizes the ribose moiety from AdoMet to the 7-aminomethyl group of 7-deazaguanine (preQ1-tRNA) to give epoxyqueuosine (oQ-tRNA). In Acidithiobacillus ferrooxidans (strain ATCC 53993 / BNL-5-31) (Leptospirillum ferrooxidans (ATCC 53993)), this protein is S-adenosylmethionine:tRNA ribosyltransferase-isomerase.